A 499-amino-acid chain; its full sequence is MNGSKDLPEPYDYDLIIIGGGSGGLAAAKEAAKYDKKVMVLDFVTPTPLGTRWGLGGTCVNVGCIPKKLMHQAALLGQALRDSRNYGWNVEETVKHDWERMTEAVQNHIGSLNWGYRVALREKKVTYENAYGEFVGPHRIKATNNKGKEKIYSAERFLIATGERPRYLGIPGDKEYCISSDDLFSLPYCPGKTLVVGASYVALECAGFLAGIGLDVTVMVRSILLRGFDQDMANKIGEHMQEHGIKFIRQFVPIKVEQIEAGTPGRLRVIAKSTDSDQTIEGEYNTVLLAIGRDACTRKIGLENVGVKINEKTGKIPVTEEEQTNVPYIYAIGDILEGKLELTPVAIQAGRLLAQRLYGGSTVKCDYENVPTTVFTPLEYGSCGLSEEKAVEKFGEENVEVYHSYFWPLEWTIPSRDNNKCYAKVVCNIKDNERVVGFHVLGPNAGEVTQGFAAALKCGLTKDQLDSTIGIHPVCAEVFTTLSVTKRSGGNILQTGCUG.

FAD contacts are provided by residues 22 to 23, 42 to 43, 58 to 59, and 63 to 67; these read SG, DF, TC, and GCIPK. Cysteine 59 and cysteine 64 are joined by a disulfide. Lysine 68 bears the N6-succinyllysine mark. A Phosphotyrosine modification is found at tyrosine 131. FAD-binding positions include 131–132 and threonine 161; that span reads YG. NADP(+) contacts are provided by residues arginine 166, 198 to 204, 221 to 222, arginine 226, 226 to 228, 292 to 293, and lysine 315; these read ASYVALE, RS, RGF, and GR. An FAD-binding site is contributed by tyrosine 200. Residues aspartate 334, 341–343, and histidine 472 each bind FAD; that span reads ELT. NADP(+) is bound at residue glutamate 341. Histidine 472 acts as the Proton acceptor in catalysis. The segment at residues 497–498 is a cross-link (cysteinyl-selenocysteine (Cys-Sec)); sequence CU. Residue selenocysteine 498 is a non-standard amino acid, selenocysteine.

Belongs to the class-I pyridine nucleotide-disulfide oxidoreductase family. In terms of assembly, homodimer. It depends on FAD as a cofactor. ISGylated.

Its subcellular location is the cytoplasm. It carries out the reaction [thioredoxin]-dithiol + NADP(+) = [thioredoxin]-disulfide + NADPH + H(+). It catalyses the reaction H2O2 + NADPH + H(+) = NADP(+) + 2 H2O. Functionally, reduces disulfideprotein thioredoxin (Trx) to its dithiol-containing form. Homodimeric flavoprotein involved in the regulation of cellular redox reactions, growth and differentiation. Contains a selenocysteine residue at the C-terminal active site that is essential for catalysis. Also has reductase activity on hydrogen peroxide (H2O2). In Bos taurus (Bovine), this protein is Thioredoxin reductase 1, cytoplasmic (TXNRD1).